The sequence spans 175 residues: Large ribosomal subunit protein uL10 (175 aa).

This sequence belongs to the universal ribosomal protein uL10 family. In terms of assembly, part of the ribosomal stalk of the 50S ribosomal subunit. The N-terminus interacts with L11 and the large rRNA to form the base of the stalk. The C-terminus forms an elongated spine to which L12 dimers bind in a sequential fashion forming a multimeric L10(L12)X complex.

In terms of biological role, forms part of the ribosomal stalk, playing a central role in the interaction of the ribosome with GTP-bound translation factors. This Prochlorococcus marinus (strain NATL2A) protein is Large ribosomal subunit protein uL10.